The following is a 67-amino-acid chain: Small ribosomal subunit protein eS27 (67 aa).

Positions 22, 25, 41, and 44 each coordinate Zn(2+). The C4-type zinc finger occupies 22–44; the sequence is CPDCGNEQVTFSHAAMVVRCLVC.

It belongs to the eukaryotic ribosomal protein eS27 family. As to quaternary structure, part of the 30S ribosomal subunit. It depends on Zn(2+) as a cofactor.

The sequence is that of Small ribosomal subunit protein eS27 from Pyrobaculum calidifontis (strain DSM 21063 / JCM 11548 / VA1).